The sequence spans 408 residues: Zinc finger and SCAN domain-containing protein 1 (408 aa).

The tract at residues 1–34 (MLPRPKAPASPRRPQTPTPSEQDADPGPASPRDT) is disordered. The region spanning 38 to 120 (RLRFRQFQYH…SLVEDLTQMC (83 aa)) is the SCAN box domain. Disordered stretches follow at residues 136–155 (WSFG…EPSQ), 177–203 (LETT…LLGS), and 215–273 (DEPE…GGTQ). Positions 177–187 (LETTQLQQSLH) are enriched in polar residues. 2 consecutive C2H2-type zinc fingers follow at residues 292–314 (FQCA…QKTH) and 320–342 (FPCP…GKIH). Residues 344–379 (LEPPRKKAPRSKGPRESVPPRDGAQGPVAPRSPKRP) are disordered. The C2H2-type 3 zinc-finger motif lies at 380 to 402 (FQCSVCGKAFPWMVHLIDHQKLH).

It localises to the nucleus. In terms of biological role, may be involved in transcriptional regulation. This chain is Zinc finger and SCAN domain-containing protein 1 (ZSCAN1), found in Homo sapiens (Human).